Reading from the N-terminus, the 660-residue chain is Putative ABC transporter ATP-binding MG390 (660 aa).

Residues 6–126 (QEQQNECGIC…KLWTGYAATV (121 aa)) form the Peptidase C39 domain. C12 is an active-site residue. Helical transmembrane passes span 150–170 (LVTF…LLAT), 188–208 (LVVL…LQVI), 265–285 (YIPN…LIGI), 290–310 (FLLI…YDFF), 379–399 (SFFQ…GIIE), and 402–422 (YQLS…TYAT). The ABC transporter domain occupies 464 to 657 (ISLENLSVTL…QNKINLTNYL (194 aa)). 494–501 (GQNGSGKS) is an ATP binding site.

The protein belongs to the ABC transporter superfamily.

Its subcellular location is the cell membrane. This is Putative ABC transporter ATP-binding MG390 from Mycoplasma genitalium (strain ATCC 33530 / DSM 19775 / NCTC 10195 / G37) (Mycoplasmoides genitalium).